A 218-amino-acid polypeptide reads, in one-letter code: Deoxyribose-phosphate aldolase (218 aa).

Aspartate 89 acts as the Proton donor/acceptor in catalysis. Lysine 152 (schiff-base intermediate with acetaldehyde) is an active-site residue. The active-site Proton donor/acceptor is lysine 182.

Belongs to the DeoC/FbaB aldolase family. DeoC type 1 subfamily.

The protein resides in the cytoplasm. The catalysed reaction is 2-deoxy-D-ribose 5-phosphate = D-glyceraldehyde 3-phosphate + acetaldehyde. Its pathway is carbohydrate degradation; 2-deoxy-D-ribose 1-phosphate degradation; D-glyceraldehyde 3-phosphate and acetaldehyde from 2-deoxy-alpha-D-ribose 1-phosphate: step 2/2. Its function is as follows. Catalyzes a reversible aldol reaction between acetaldehyde and D-glyceraldehyde 3-phosphate to generate 2-deoxy-D-ribose 5-phosphate. This chain is Deoxyribose-phosphate aldolase, found in Kocuria rhizophila (strain ATCC 9341 / DSM 348 / NBRC 103217 / DC2201).